A 1343-amino-acid polypeptide reads, in one-letter code: MVYSYSEKKRIRKDFGKRPQVLDIPYLLSIQLDSFKKFTDQDPTGERGFEAAFRSVFPIKSFSGNSELQYVSYKLGEPVFDVKECQIRGVTYSAPLRVKLRMVLYDREAAPGTVKDIKEQEVYMGDIPMMTDNGTFVINGTERVIVSQLHRSPGVFFDHDRGKTHSSGKVLYNARIIPYRGSWLDFEFDPKDALFVRIDRRRKLAASIILRALDYSTQDILDLFFDRVNFKIKKDSLVMDLVAERLRGETASYDIKDSEGSILVEKGRRITARHIRQLEKTNTTELEVPVDYISGKISGQDYIDPDTGEVLVSANAEISLEDLAKLSLAGIKEISTLYINELDNGAYMSDTLRIDSTTNRLEALVEIYRMMRPGEPPTKDAAEALFQNLFFSEERYDLSKVGRMKFNRRLSIDDDEGTGILSKEDIVAVMKNIITIRNGNDEVDDIDHLGNRRIRSVGEMAENQFRVGLVRVERAVRERLSLGDLNELMPQDLINAKPISAAVKEFFGSSQLSQFMDQNNPLSEVTHKRRISALGPGGLTRERAGFEVRDVHPTHYGRLCPIETPEGPNIGLINSLASFARTNSYGFLETPYRKVIDGVVTDQVDYLSAIEEGRYVIAQAIVDLDADGRMMDELIACRHKGDSTFMGAGDIQYMDVSPQQIISVAASLIPFLEHDDANRALMGANMQRQAVPTLKADKPLVGTGIERTLAVDSGVVVAAKRGGYVDYVDASRIVVKVNESELTPGEAGIDIYNLTKYTRSNQNTCINQRPCCSMGDPVVRGDVLADGPSTDLGDLALGQNMRIAFMPWNGYNFEDSILISERVAMEDRFTTIHIQELSCIARDTKLGSEEITADIPNVGESALSKLDESGIVYIGAEVKGGDILVGKVTPKGETQLTPEEKLLRAIFGEKASDVKDSSLRVPNSVKGTIIDVQVFTRDGVEKDKRAVEIEEMHVGQAKKDLSEEFQILEEGVYGRARNLLLNAGFTEDQLATIPRSQLLVQTIDDEAKQTELEQLAEQHDELKADFDKKFEIKRRKITQGDDLAPGVLKIVKVYLAVKRTIQPGDKMAGRHGNKGVISKINPVEDMPYDENGNPIDIVLNPLGVPSRMNIGQVLEVHMGAAAKGIGDRITAMLEEQRELAELRGYIKEVYELGEEVQQRVDIDSFTDDEVLRLAKNLKGGVPTATPAFDGAKEKEIKEMLALAGLPTSGQRRLFDGRTGDEFERQVTVGYMYMLKLNHLVDDKMHARSTGSYSLVTQQPLGGKAQFGGQRFGEMEVWALEAYGAAYTLQEMLTVKSDDVNGRTHMYKNIVDGNHQMQPGMPESFNVLLKEIRSLGINIELDQD.

Belongs to the RNA polymerase beta chain family. As to quaternary structure, the RNAP catalytic core consists of 2 alpha, 1 beta, 1 beta' and 1 omega subunit. When a sigma factor is associated with the core the holoenzyme is formed, which can initiate transcription.

It carries out the reaction RNA(n) + a ribonucleoside 5'-triphosphate = RNA(n+1) + diphosphate. Functionally, DNA-dependent RNA polymerase catalyzes the transcription of DNA into RNA using the four ribonucleoside triphosphates as substrates. The polypeptide is DNA-directed RNA polymerase subunit beta (Shewanella sediminis (strain HAW-EB3)).